Here is a 324-residue protein sequence, read N- to C-terminus: Dolichyl-phosphate beta-glucosyltransferase (324 aa).

Over Met1 to Gln7 the chain is Lumenal. Residues Leu8 to Phe28 form a helical membrane-spanning segment. At Ile29–Ser324 the chain is on the cytoplasmic side.

It belongs to the glycosyltransferase 2 family.

The protein localises to the endoplasmic reticulum membrane. It carries out the reaction a di-trans,poly-cis-dolichyl phosphate + UDP-alpha-D-glucose = a di-trans,poly-cis-dolichyl beta-D-glucosyl phosphate + UDP. It participates in protein modification; protein glycosylation. Functionally, dolichyl-phosphate beta-glucosyltransferase that operates in the biosynthetic pathway of dolichol-linked oligosaccharides, the glycan precursors employed in protein asparagine (N)-glycosylation. The assembly of dolichol-linked oligosaccharides begins on the cytosolic side of the endoplasmic reticulum membrane and finishes in its lumen. The sequential addition of sugars to dolichol pyrophosphate produces dolichol-linked oligosaccharides containing fourteen sugars, including two GlcNAcs, nine mannoses and three glucoses. Once assembled, the oligosaccharide is transferred from the lipid to nascent proteins by oligosaccharyltransferases. Dolichyl-phosphate beta-glucosyltransferase produces dolichyl beta-D-glucosyl phosphate/Dol-P-Glc, the glucose donor substrate used sequentially by ALG6, ALG8 and ALG10 to add glucose residues on top of the Man(9)GlcNAc(2)-PP-Dol structure. These are the three last steps in the biosynthetic pathway of dolichol-linked oligosaccharides to produce Glc(3)Man(9)GlcNAc(2)-PP-Dol. The enzyme is most probably active on the cytoplasmic side of the endoplasmic reticulum while its product Dol-P-Glc is the substrate for ALG6, ALG8 and ALG11 in the lumen of the endoplasmic reticulum. The sequence is that of Dolichyl-phosphate beta-glucosyltransferase from Mus musculus (Mouse).